We begin with the raw amino-acid sequence, 86 residues long: MKPGIHPDYREVVFQDMSNGFKFITRSTIQTRENIELDGKTYPLAKIEVSSESHSFYTGQQKIMDTAGRVEKFKNKFGVRANGKAK.

It belongs to the bacterial ribosomal protein bL31 family. Type B subfamily. In terms of assembly, part of the 50S ribosomal subunit.

The protein is Large ribosomal subunit protein bL31B of Burkholderia cenocepacia (strain ATCC BAA-245 / DSM 16553 / LMG 16656 / NCTC 13227 / J2315 / CF5610) (Burkholderia cepacia (strain J2315)).